The sequence spans 269 residues: tRNA pseudouridine synthase A (269 aa).

Residue Asp51 is the Nucleophile of the active site. Tyr109 is a binding site for substrate.

It belongs to the tRNA pseudouridine synthase TruA family. In terms of assembly, homodimer.

It carries out the reaction uridine(38/39/40) in tRNA = pseudouridine(38/39/40) in tRNA. Formation of pseudouridine at positions 38, 39 and 40 in the anticodon stem and loop of transfer RNAs. The protein is tRNA pseudouridine synthase A of Histophilus somni (strain 2336) (Haemophilus somnus).